The sequence spans 197 residues: Phosphoheptose isomerase (197 aa).

An SIS domain is found at 34–196 (MVHCLLGGNK…DRTLFPQDEQ (163 aa)). 49–51 (NGG) is a substrate binding site. Residues histidine 58 and glutamate 62 each contribute to the Zn(2+) site. Substrate contacts are provided by residues glutamate 62, 91–92 (ND), 117–119 (STS), serine 122, and glutamine 172. Zn(2+) contacts are provided by glutamine 172 and histidine 180.

This sequence belongs to the SIS family. GmhA subfamily. In terms of assembly, homotetramer. The cofactor is Zn(2+).

The protein localises to the cytoplasm. The enzyme catalyses 2 D-sedoheptulose 7-phosphate = D-glycero-alpha-D-manno-heptose 7-phosphate + D-glycero-beta-D-manno-heptose 7-phosphate. The protein operates within carbohydrate biosynthesis; D-glycero-D-manno-heptose 7-phosphate biosynthesis; D-glycero-alpha-D-manno-heptose 7-phosphate and D-glycero-beta-D-manno-heptose 7-phosphate from sedoheptulose 7-phosphate: step 1/1. Catalyzes the isomerization of sedoheptulose 7-phosphate in D-glycero-D-manno-heptose 7-phosphate. This is Phosphoheptose isomerase from Shewanella sp. (strain W3-18-1).